Here is a 141-residue protein sequence, read N- to C-terminus: UPF0179 protein Cmaq_1008 (141 aa).

This sequence belongs to the UPF0179 family.

The sequence is that of UPF0179 protein Cmaq_1008 from Caldivirga maquilingensis (strain ATCC 700844 / DSM 13496 / JCM 10307 / IC-167).